We begin with the raw amino-acid sequence, 504 residues long: Anaerobic nitric oxide reductase transcription regulator NorR (504 aa).

Asp57 is subject to 4-aspartylphosphate. The Sigma-54 factor interaction domain maps to 187-416; it reads MIGLSPGMTQ…LEHAIHRAVV (230 aa). ATP is bound by residues 215–222 and 278–287; these read GETGTGKE and ADNGTLFLDE. The segment at residues 479–498 is a DNA-binding region (H-T-H motif); that stretch reads WAACARMLETDVANLHRLAK.

It participates in nitrogen metabolism; nitric oxide reduction. Required for the expression of anaerobic nitric oxide (NO) reductase, acts as a transcriptional activator for at least the norVW operon. Activation also requires sigma-54. This Escherichia coli O139:H28 (strain E24377A / ETEC) protein is Anaerobic nitric oxide reductase transcription regulator NorR.